Consider the following 825-residue polypeptide: NT-3 growth factor receptor (825 aa).

The first 31 residues, Met1–Ala31, serve as a signal peptide directing secretion. Cystine bridges form between Cys32-Cys38 and Cys36-Cys45. The Extracellular portion of the chain corresponds to Cys32–Thr429. Asn68, Asn72, and Asn79 each carry an N-linked (GlcNAc...) asparagine glycan. LRR repeat units lie at residues Gly104–Lys125 and His128–Thr149. 2 N-linked (GlcNAc...) asparagine glycosylation sites follow: Asn133 and Asn163. The region spanning Asn160–Leu209 is the LRRCT domain. Cystine bridges form between Cys164/Cys189 and Cys166/Cys207. Residues Asn203, Asn218, Asn232, Asn259, Asn267, Asn272, and Asn294 are each glycosylated (N-linked (GlcNAc...) asparagine). Ig-like C2-type domains follow at residues Pro210–Thr300 and Ser309–Glu382. Cys231 and Cys284 form a disulfide bridge. Cys320 and Cys362 are oxidised to a cystine. N-linked (GlcNAc...) asparagine glycosylation is found at Asn375 and Asn388. A helical membrane pass occupies residues Phe430–Ile453. Residues Asn454–Gly825 are Cytoplasmic-facing. Tyr516 is modified (phosphotyrosine; by autocatalysis). Positions Ile538–Gly814 constitute a Protein kinase domain. ATP-binding positions include Leu544–Val552 and Lys572. Asp679 serves as the catalytic Proton acceptor. 4 positions are modified to phosphotyrosine; by autocatalysis: Tyr705, Tyr709, Tyr710, and Tyr820.

Belongs to the protein kinase superfamily. Tyr protein kinase family. Insulin receptor subfamily. In terms of assembly, exists in a dynamic equilibrium between monomeric (low affinity) and dimeric (high affinity) structures. Binds SH2B2. Interacts with SQSTM1 and KIDINS220. Interacts with PTPRS. Interacts with MAPK8IP3/JIP3. Ligand-mediated auto-phosphorylation. As to expression, preferentially in the brain, low levels in the ovaries.

The protein resides in the membrane. It catalyses the reaction L-tyrosyl-[protein] + ATP = O-phospho-L-tyrosyl-[protein] + ADP + H(+). Its function is as follows. Receptor tyrosine kinase involved in nervous system and probably heart development. Upon binding of its ligand NTF3/neurotrophin-3, NTRK3 autophosphorylates and activates different signaling pathways, including the phosphatidylinositol 3-kinase/AKT and the MAPK pathways, that control cell survival and differentiation. The protein is NT-3 growth factor receptor (NTRK3) of Sus scrofa (Pig).